A 390-amino-acid polypeptide reads, in one-letter code: Na(+)/H(+) antiporter NhaA 2 (390 aa).

11 helical membrane-spanning segments follow: residues 23–43 (IVLI…LAAA), 63–83 (LHLW…GLEI), 100–120 (LPVL…LAIT), 129–149 (GWAI…ALVG), 158–178 (LFLL…IALF), 181–201 (SGLK…LVLV), 208–228 (ALLP…HSGI), 265–285 (GFVI…GADF), 293–313 (LGIA…SILV), 331–351 (LWGI…IAGL), and 362–382 (EAKL…LLVL).

This sequence belongs to the NhaA Na(+)/H(+) (TC 2.A.33) antiporter family.

It localises to the cell inner membrane. The enzyme catalyses Na(+)(in) + 2 H(+)(out) = Na(+)(out) + 2 H(+)(in). Functionally, na(+)/H(+) antiporter that extrudes sodium in exchange for external protons. The protein is Na(+)/H(+) antiporter NhaA 2 of Novosphingobium aromaticivorans (strain ATCC 700278 / DSM 12444 / CCUG 56034 / CIP 105152 / NBRC 16084 / F199).